The sequence spans 867 residues: Glutamate receptor 1.2 (867 aa).

A signal peptide spans 1-27 (MVRICIQTPILLSFLLVLLFFISNCFA). Topologically, residues 28 to 560 (SSQNNDDDKR…SMWVFFQPLT (533 aa)) are extracellular. Residues Asn301, Asn400, Asn496, and Asn499 are each glycosylated (N-linked (GlcNAc...) asparagine). Residues 561–581 (PNLWITSAAFFVLTGIIVWLI) traverse the membrane as a helical segment. Residues 582–590 (ERAENKEFQ) lie on the Cytoplasmic side of the membrane. The helical transmembrane segment at 591–611 (GSWPQQIGVVIWFGFSTLVYA) threads the bilayer. Residues 612–622 (HREKLQHNLSR) are Cytoplasmic-facing. Residues 623-643 (FVVTVWVFAVLILVTSYTATL) form a helical membrane-spanning segment. Over 644–792 (TSMMTVQQIR…NPITLYRFRG (149 aa)) the chain is Extracellular. N-linked (GlcNAc...) asparagine glycans are attached at residues Asn676, Asn688, Asn699, and Asn748. Residues 793–813 (LFMITGVSFAFALAVLLILWL) form a helical membrane-spanning segment. Topologically, residues 814–867 (RERWEILVNSVNIYFSQRLRHFRILFTRTIHPSPLGLDNPIGENAVQMAQRNRR) are cytoplasmic.

Belongs to the glutamate-gated ion channel (TC 1.A.10.1) family. In terms of assembly, may form heteromers. As to expression, expressed predominantly in roots and siliques.

The protein localises to the membrane. Functionally, glutamate-gated receptor that probably acts as a non-selective cation channel. May be involved in light-signal transduction and calcium homeostasis via the regulation of calcium influx into cells. The sequence is that of Glutamate receptor 1.2 (GLR1.2) from Arabidopsis thaliana (Mouse-ear cress).